The chain runs to 651 residues: Acid beta-fructofuranosidase (651 aa).

Residues 1–23 (MEHHKPLLPTSSHAAPNPRTRKD) are Cytoplasmic-facing. A propeptide spans 1–103 (MEHHKPLLPT…LFSGEGGASE (103 aa)) (removed in mature form). Residues 24-44 (LLLLLCALLFLSSLVAFGRNR) form a helical; Signal-anchor for type II membrane protein membrane-spanning segment. Topologically, residues 45-651 (ASNVPHDHVS…PFPFNPDQKN (607 aa)) are lumenal. The interval 48–76 (VPHDHVSSSASNHQQEHQSPTSLPSSKWH) is disordered. Polar residues predominate over residues 54-72 (SSSASNHQQEHQSPTSLPS). Substrate contacts are provided by residues 127–130 (WMND), glutamine 146, tryptophan 154, and 189–190 (WT). Residue aspartate 130 is part of the active site. N-linked (GlcNAc...) asparagine glycosylation occurs at asparagine 210. 253 to 254 (RD) lines the substrate pocket. Asparagine 275 carries N-linked (GlcNAc...) asparagine glycosylation. Positions 308 and 343 each coordinate substrate. Cysteine 500 and cysteine 548 form a disulfide bridge. Asparagine 620 is a glycosylation site (N-linked (GlcNAc...) asparagine).

The protein belongs to the glycosyl hydrolase 32 family. As to quaternary structure, may be present in two forms, a 70 kDa monomer and a heterodimer of the 30 kDa and 38 kDa subunits. The ratio of the levels of the two forms within cells appears to be regulated developmentally.

It localises to the membrane. The protein resides in the vacuole lumen. The catalysed reaction is Hydrolysis of terminal non-reducing beta-D-fructofuranoside residues in beta-D-fructofuranosides.. The protein operates within glycan biosynthesis; sucrose metabolism. This is Acid beta-fructofuranosidase from Phaseolus vulgaris (Kidney bean).